We begin with the raw amino-acid sequence, 447 residues long: ATP-dependent protease ATPase subunit HslU (447 aa).

Residues I18, 60-65 (GVGKTE), D259, E325, and R397 contribute to the ATP site.

Belongs to the ClpX chaperone family. HslU subfamily. A double ring-shaped homohexamer of HslV is capped on each side by a ring-shaped HslU homohexamer. The assembly of the HslU/HslV complex is dependent on binding of ATP.

It localises to the cytoplasm. In terms of biological role, ATPase subunit of a proteasome-like degradation complex; this subunit has chaperone activity. The binding of ATP and its subsequent hydrolysis by HslU are essential for unfolding of protein substrates subsequently hydrolyzed by HslV. HslU recognizes the N-terminal part of its protein substrates and unfolds these before they are guided to HslV for hydrolysis. The chain is ATP-dependent protease ATPase subunit HslU from Burkholderia cenocepacia (strain ATCC BAA-245 / DSM 16553 / LMG 16656 / NCTC 13227 / J2315 / CF5610) (Burkholderia cepacia (strain J2315)).